Reading from the N-terminus, the 169-residue chain is Disulfide bond formation protein B 1 (169 aa).

The Cytoplasmic segment spans residues Met-1–Phe-14. A helical transmembrane segment spans residues Leu-15 to Tyr-31. At Met-32–Tyr-49 the chain is on the periplasmic side. Residues Cys-41 and Cys-44 are joined by a disulfide bond. A helical transmembrane segment spans residues Ala-50–Met-64. Residues Ser-65–Thr-71 are Cytoplasmic-facing. The chain crosses the membrane as a helical span at residues Val-72 to Gly-89. Over Arg-90–Gln-144 the chain is Periplasmic. An intrachain disulfide couples Cys-102 to Cys-130. A helical membrane pass occupies residues Trp-145–Arg-163. The Cytoplasmic segment spans residues Asn-164–Tyr-169.

Belongs to the DsbB family.

Its subcellular location is the cell inner membrane. Its function is as follows. Required for disulfide bond formation in some periplasmic proteins. Acts by oxidizing the DsbA protein. This is Disulfide bond formation protein B 1 from Pseudomonas savastanoi pv. phaseolicola (strain 1448A / Race 6) (Pseudomonas syringae pv. phaseolicola (strain 1448A / Race 6)).